Here is a 462-residue protein sequence, read N- to C-terminus: MSAEPHPLYRQLPAIDRLLNEPEMAPLLAEYGPVLLADTLRQLQAEAREYIGQFHTLADWCADWPAALRQRLNQRQPALKPVFNLTGTVLHTNLGRAPLAESAIAAVTDAMRSAVTLEYSLEGAGRGHRDRAVADLLCALTGAEDACIVNNNAAAVFLLLTVMAAGKQVVVSRGELVEIGGAFRIPDVMRQAGCDLVEVGTTNRTHLKDYRQAINENTGLLMKVHTSNYSIEGFTAAVSEQQLAALGQECSIPTATDLGSGSLVDMTRYGLPAEPMPQQLIAAGVDLVTFSGDKLLGGPQAGIILGKKQWIERLQQHPLKRALRADKMTLAALDATLRLYQQPDRLVEQLPSLRLLTRPASEIAACAQRLLAPLIACYGTDFTLDIESCWSQIGSGSLPVDRLPSWALTFTPKDGRGSTLEALTARWRTLTKPVIGRVADGRLWLDLRCLEDEAALLRELAS.

The residue at position 294 (K294) is an N6-(pyridoxal phosphate)lysine.

This sequence belongs to the SelA family. As to quaternary structure, homodecamer; pentamer of dimers. Binds only one seryl-tRNA(Sec) per dimer. Requires pyridoxal 5'-phosphate as cofactor.

It localises to the cytoplasm. It carries out the reaction L-seryl-tRNA(Sec) + selenophosphate + H(+) = L-selenocysteinyl-tRNA(Sec) + phosphate. It functions in the pathway aminoacyl-tRNA biosynthesis; selenocysteinyl-tRNA(Sec) biosynthesis; selenocysteinyl-tRNA(Sec) from L-seryl-tRNA(Sec) (bacterial route): step 1/1. Its function is as follows. Converts seryl-tRNA(Sec) to selenocysteinyl-tRNA(Sec) required for selenoprotein biosynthesis. The chain is L-seryl-tRNA(Sec) selenium transferase from Yersinia pseudotuberculosis serotype O:1b (strain IP 31758).